The following is a 29-amino-acid chain: Beta-theraphotoxin-Gr1b (29 aa).

Disulfide bonds link Cys-2–Cys-16, Cys-9–Cys-21, and Cys-15–Cys-25. Leu-29 is modified (leucine amide).

This sequence belongs to the neurotoxin 30 (phrixotoxin) family. As to expression, expressed by the venom gland.

It localises to the secreted. Inhibits the voltage-gated sodium channels Nav1.1/SCN1A (IC(50)=360 nM), Nav1.2/SCN2A (IC(50)=600 nM), Nav1.3/SCN3A (IC(50)=1280), Nav1.4/SCN4A (IC(50)=330 nM), Nav1.6/SCN8A (IC(50)=1200 nM), Nav1.7/SCN9A (IC(50)=1-40 nM), and voltage-gated potassium channels Kv11.1/KCNH2 (IC(50)=4.8 uM). Induces analgesia in mammals. This analgesia is mediated by a non-opioid receptor related mechanism. The polypeptide is Beta-theraphotoxin-Gr1b (Grammostola rosea (Chilean rose tarantula)).